We begin with the raw amino-acid sequence, 262 residues long: Ribosomal RNA small subunit methyltransferase A (262 aa).

S-adenosyl-L-methionine is bound by residues Asn-20, Leu-22, Gly-47, Glu-68, Asp-90, and Asn-110.

Belongs to the class I-like SAM-binding methyltransferase superfamily. rRNA adenine N(6)-methyltransferase family. RsmA subfamily.

It is found in the cytoplasm. It carries out the reaction adenosine(1518)/adenosine(1519) in 16S rRNA + 4 S-adenosyl-L-methionine = N(6)-dimethyladenosine(1518)/N(6)-dimethyladenosine(1519) in 16S rRNA + 4 S-adenosyl-L-homocysteine + 4 H(+). Its function is as follows. Specifically dimethylates two adjacent adenosines (A1518 and A1519) in the loop of a conserved hairpin near the 3'-end of 16S rRNA in the 30S particle. May play a critical role in biogenesis of 30S subunits. The sequence is that of Ribosomal RNA small subunit methyltransferase A from Chlorobium phaeobacteroides (strain BS1).